The following is a 261-amino-acid chain: Proteasome subunit alpha type-4 (261 aa).

Residues S13 and S75 each carry the phosphoserine modification. K127 is modified (N6-acetyllysine). S173 carries the phosphoserine modification. K176 is subject to N6-acetyllysine. The segment at 240 to 261 (HEEEEAKAEREKKEKEQKEKDK) is disordered.

The protein belongs to the peptidase T1A family. As to quaternary structure, the 26S proteasome consists of a 20S proteasome core and two 19S regulatory subunits. The 20S proteasome core is a barrel-shaped complex made of 28 subunits that are arranged in four stacked rings. The two outer rings are each formed by seven alpha subunits, and the two inner rings are formed by seven beta subunits. The proteolytic activity is exerted by three beta-subunits PSMB5, PSMB6 and PSMB7.

The protein localises to the cytoplasm. The protein resides in the nucleus. In terms of biological role, component of the 20S core proteasome complex involved in the proteolytic degradation of most intracellular proteins. This complex plays numerous essential roles within the cell by associating with different regulatory particles. Associated with two 19S regulatory particles, forms the 26S proteasome and thus participates in the ATP-dependent degradation of ubiquitinated proteins. The 26S proteasome plays a key role in the maintenance of protein homeostasis by removing misfolded or damaged proteins that could impair cellular functions, and by removing proteins whose functions are no longer required. Associated with the PA200 or PA28, the 20S proteasome mediates ubiquitin-independent protein degradation. This type of proteolysis is required in several pathways including spermatogenesis (20S-PA200 complex) or generation of a subset of MHC class I-presented antigenic peptides (20S-PA28 complex). The polypeptide is Proteasome subunit alpha type-4 (PSMA4) (Macaca fascicularis (Crab-eating macaque)).